Reading from the N-terminus, the 335-residue chain is 3-ketodihydrosphingosine reductase TSC10 (335 aa).

Gly-42, Ser-44, Ser-45, and Gly-46 together coordinate NADPH. Residues 42–46 carry the GXSXG motif; that stretch reads GGSSG. Leu-47 provides a ligand contact to NADP(+). 5 residues coordinate NADPH: Arg-67, Asp-68, Lys-71, Asp-95, and Leu-96. Asp-95 contacts NADP(+). Positions 190, 194, and 223 each coordinate NADP(+). Tyr-190 functions as the Proton acceptor in the catalytic mechanism. Lys-194 functions as the Lowers pKa of active site Tyr in the catalytic mechanism. The helical transmembrane segment at 288–308 threads the bilayer; it reads TNNFLLDTLWLIVSSVGVPIW.

It belongs to the short-chain dehydrogenases/reductases (SDR) family.

It is found in the endoplasmic reticulum membrane. The enzyme catalyses sphinganine + NADP(+) = 3-oxosphinganine + NADPH + H(+). The protein operates within lipid metabolism; sphingolipid metabolism. In terms of biological role, catalyzes the reduction of 3'-oxosphinganine (3-ketodihydrosphingosine/KDS) to sphinganine (dihydrosphingosine/DHS), the second step of de novo sphingolipid biosynthesis. The protein is 3-ketodihydrosphingosine reductase TSC10 (TSC10) of Cryptococcus neoformans var. neoformans serotype D (strain B-3501A) (Filobasidiella neoformans).